A 149-amino-acid polypeptide reads, in one-letter code: L-alanine exporter AlaE (149 aa).

Transmembrane regions (helical) follow at residues 16 to 36 (FAMVVYCSVVNMLIEIFLSGM), 46 to 66 (LVAIPVNILIAWPYGVYRDLI), 83 to 105 (ADVLAYVTFQSPVYIIILLTVGA), and 115 to 135 (SSNIVVSMLMGAVYGYFLDYC).

It belongs to the AlaE exporter family.

The protein resides in the cell inner membrane. Exports L-alanine. The protein is L-alanine exporter AlaE of Salmonella typhimurium (strain LT2 / SGSC1412 / ATCC 700720).